The following is a 339-amino-acid chain: MEAKLKALEEKAKLEISQADSTAVLEQARVHYLGKKGELTEILRGMGALSAEERPLVGKIANLVRENIEAALEEAKATVKSKELEKKLMAETIDVTMPGKAIKLGKKHPLTQAMDDLKEIFISMGFKVVEGPEIETVYYNFDGLNAAKNHPSRDMSDTFYFNENTILRTQTSPVQVRTMEKSKPPIRIVSLGRCFRNDTPDATHSPMFHQIEGLVVDEGITMGDLKGTLEVFAKNFFGEDTKIKFRPHNFPFTEPSAEVDATCFKCGGKGCGVCKGNGWIEVLGAGMVHPNVLRNCGIDPEIYSGFAFGMGIDRLTMQKYGIDDIRLLFENDMRFIDQF.

Glu-254 provides a ligand contact to Mg(2+).

The protein belongs to the class-II aminoacyl-tRNA synthetase family. Phe-tRNA synthetase alpha subunit type 1 subfamily. Tetramer of two alpha and two beta subunits. It depends on Mg(2+) as a cofactor.

The protein localises to the cytoplasm. It catalyses the reaction tRNA(Phe) + L-phenylalanine + ATP = L-phenylalanyl-tRNA(Phe) + AMP + diphosphate + H(+). The protein is Phenylalanine--tRNA ligase alpha subunit of Alkaliphilus oremlandii (strain OhILAs) (Clostridium oremlandii (strain OhILAs)).